We begin with the raw amino-acid sequence, 797 residues long: MDELAGGGGGGPAMASPPRQQQGPGGNMSLSPGGNGAAGGGGPPATEGAGPAAGPELSRPQQYTIPGILHYIQHEWARFEMERAHWEVERAELQARIAFLQGERKGQENLKKDLVRRIKMLEYALKQERAKYHKLKYGTELNQGDLKMPTFESEETKDTEAPTAPQNSQLTWKQGRQLLRQYLQEVGYTDTILDVRSQRVRSLLGLSNSEPNGSVETKNLEQILNGGESPKQKGQEIKRTSGDVLETFNFLENADDSDEEEENDMIEGIPEGKDKHRINKHKIGNEGLAADLTDDPDTEEALKEFDFLVTAEDGEGAGEARSSGDGTEWDKDDLSPTTEVWDVDQGLISKLKEQYKKERKGKKGVKRVNRTKLYDTIADLGDDELPLIPSGIINQSRSASTRMTDHEGARAEEAEPITFPSGGGKSFIMGSDDVLLSVLGLGDLADLTVTNDADYSYDLPANKDAFRKTWNPKYTLRSHFDGVRALAFHPVEPVLVTASEDHTLKLWNLQKTVPAKKSASLDVEPIYTFRAHIGPVLSLAISSNGEQCFSGGTDATIQWWNMPSPNVDPYDTYEPNVLAGTLIAHTDAVWGLAYSGIKNQLLSCSADGTVRLWNPQEKLPCICTYNGDKEHGIPTSVDFIGCDPAHMVTSFNTGSTVIYDLETSQSLVMLSSQMDSGLQSSNHINRVVSHPTLPVTITAHEDRHIKFFDNKTGKMIHSMVAHLDAVTSLAVDPNGIYLMSGSHDCSIRLWNLDSKTCVQEITAHRKKLDESIYDVAFHPSKAYIASAGADALAKVFV.

Met-1 carries the N-acetylmethionine modification. Gly residues-rich tracts occupy residues 1–12 and 33–43; these read MDELAGGGGGGP and GGNGAAGGGGP. The tract at residues 1–60 is disordered; it reads MDELAGGGGGGPAMASPPRQQQGPGGNMSLSPGGNGAAGGGGPPATEGAGPAAGPELSRP. The span at 44–55 shows a compositional bias: low complexity; it reads PATEGAGPAAGP. A caveolin-binding region spans residues 71 to 79; it reads YIQHEWARF. Residues 77–136 are a coiled coil; that stretch reads ARFEMERAHWEVERAELQARIAFLQGERKGQENLKKDLVRRIKMLEYALKQERAKYHKLK. Thr-150 carries the phosphothreonine modification. The calmodulin-binding stretch occupies residues 166 to 183; the sequence is QNSQLTWKQGRQLLRQYL. Residues Ser-202, Ser-214, Ser-229, Ser-257, and Ser-335 each carry the phosphoserine modification. The disordered stretch occupies residues 313 to 336; sequence DGEGAGEARSSGDGTEWDKDDLSP. 6 WD repeats span residues 478–517, 531–570, 584–623, 679–718, 721–760, and 767–796; these read SHFD…PAKK, AHIG…VDPY, AHTD…PCIC, QSSN…MIHS, AHLD…CVQE, and KLDE…AKVF.

This sequence belongs to the WD repeat striatin family. As to quaternary structure, tetramerizes. Part of the core of STRIPAK complexes composed of PP2A catalytic and scaffolding subunits, the striatins (PP2A regulatory subunits), the striatin-associated proteins MOB4, STRIP1 and STRIP2, PDCD10 and members of the STE20 kinases, such as STK24 and STK26. The STRIPAK complex can be extended by adapter proteins such as SLMAP:SIKE1 or CTTNBP2NL. Interacts with CDC42BPB.

It localises to the cytoplasm. The protein resides in the membrane. Its function is as follows. Calmodulin-binding scaffolding protein which is the center of the striatin-interacting phosphatase and kinase (STRIPAK) complexes. STRIPAK complexes have critical roles in protein (de)phosphorylation and are regulators of multiple signaling pathways including Hippo, MAPK, nuclear receptor and cytoskeleton remodeling. Different types of STRIPAK complexes are involved in a variety of biological processes such as cell growth, differentiation, apoptosis, metabolism and immune regulation. The protein is Striatin-3 (STRN3) of Bos taurus (Bovine).